The following is a 213-amino-acid chain: Putative 3-methyladenine DNA glycosylase (213 aa).

This sequence belongs to the DNA glycosylase MPG family.

The chain is Putative 3-methyladenine DNA glycosylase from Latilactobacillus sakei subsp. sakei (strain 23K) (Lactobacillus sakei subsp. sakei).